We begin with the raw amino-acid sequence, 282 residues long: ATP synthase gamma chain (282 aa).

Belongs to the ATPase gamma chain family. As to quaternary structure, F-type ATPases have 2 components, CF(1) - the catalytic core - and CF(0) - the membrane proton channel. CF(1) has five subunits: alpha(3), beta(3), gamma(1), delta(1), epsilon(1). CF(0) has three main subunits: a, b and c.

The protein resides in the cell membrane. Produces ATP from ADP in the presence of a proton gradient across the membrane. The gamma chain is believed to be important in regulating ATPase activity and the flow of protons through the CF(0) complex. The sequence is that of ATP synthase gamma chain from Clostridium botulinum (strain 657 / Type Ba4).